Here is a 364-residue protein sequence, read N- to C-terminus: MLIFPLINDTSRKIIHIDMDAFFAAVEERDNLALKGKPVVIGKDPRETGGRGVVSTCNYEARKYGIHSAMSSKEAYERCPKAIFISGNYEKYRTVGEQIRRIFKRYTDVVEPMSIDEAYLDVTNNKLGIKSAVKIAKLIQHDIWKEVGLTCSAGVSYNKFLAKLASDFEKPHGLTLVLKEDALCFLAKLPIEKFHGVGKKSVEKLHDMGIYTGQDLLAVPEMTLIDHFGRFGFDLYRKARGISNSPVKSDRIRKSIGSERTYAKLLYQETDIKAEISKNAKRVAALLQDHKKLGKTIVLKVRYADFTTLTKRVTLPELTRNAAQIEQVAGDIFDSLSENPAGIRLLGVTMTNLEDKVADISLDL.

The UmuC domain occupies Ile14–Gly198. Residues Asp18 and Asp116 each coordinate Mg(2+). Residue Glu117 is part of the active site.

Belongs to the DNA polymerase type-Y family. Monomer. Mg(2+) is required as a cofactor.

It localises to the cytoplasm. The enzyme catalyses DNA(n) + a 2'-deoxyribonucleoside 5'-triphosphate = DNA(n+1) + diphosphate. Its function is as follows. Poorly processive, error-prone DNA polymerase involved in untargeted mutagenesis. Copies undamaged DNA at stalled replication forks, which arise in vivo from mismatched or misaligned primer ends. These misaligned primers can be extended by PolIV. Exhibits no 3'-5' exonuclease (proofreading) activity. May be involved in translesional synthesis, in conjunction with the beta clamp from PolIII. In Streptococcus pyogenes serotype M12 (strain MGAS2096), this protein is DNA polymerase IV.